The chain runs to 1203 residues: Metabotropic glutamate receptor 5 (1203 aa).

The N-terminal stretch at 1–18 (MVLLLILSVLLLKEDVRG) is a signal peptide. At 19-579 (SAQSSERRVV…QYLRWGDPEP (561 aa)) the chain is on the extracellular side. Cysteine 57 and cysteine 99 are joined by a disulfide. L-glutamate is bound at residue tyrosine 64. Residue asparagine 88 is glycosylated (N-linked (GlcNAc...) asparagine). L-glutamate is bound by residues serine 151 and 172–174 (SAT). The N-linked (GlcNAc...) asparagine glycan is linked to asparagine 209. Tyrosine 222 contributes to the L-glutamate binding site. 8 disulfide bridges follow: cysteine 240–cysteine 529, cysteine 275–cysteine 277, cysteine 364–cysteine 380, cysteine 418–cysteine 425, cysteine 510–cysteine 530, cysteine 514–cysteine 533, cysteine 536–cysteine 548, and cysteine 551–cysteine 564. Residue aspartate 304 participates in L-glutamate binding. N-linked (GlcNAc...) asparagine glycosylation is found at asparagine 377 and asparagine 381. Lysine 395 is an L-glutamate binding site. N-linked (GlcNAc...) asparagine glycosylation is present at asparagine 444. Residues 580–602 (IAAVVFACLGLLATLFVTVIFII) form a helical membrane-spanning segment. Over 603-612 (YRDTPVVKSS) the chain is Cytoplasmic. A helical transmembrane segment spans residues 613–635 (SRELCYIILAGICLGYLCTFCLI). Over 636 to 643 (AKPKQIYC) the chain is Extracellular. Cysteine 643 and cysteine 732 are joined by a disulfide. A helical transmembrane segment spans residues 644-666 (YLQRIGIGLSPAMSYSALVTKTN). Over 667–692 (RIARILAGSKKKICTKKPRFMSACAQ) the chain is Cytoplasmic. The chain crosses the membrane as a helical span at residues 693 to 713 (LVIAFILICIQLGIIVALFIM). The Extracellular portion of the chain corresponds to 714-736 (EPPDIMHDYPSIREVYLICNTTN). A glycan (N-linked (GlcNAc...) asparagine) is linked at asparagine 733. Residues 737–758 (LGVVTPLGYNGLLILSCTFYAF) form a helical membrane-spanning segment. The Cytoplasmic segment spans residues 759-771 (KTRNVPANFNEAK). The chain crosses the membrane as a helical span at residues 772–794 (YIAFTMYTTCIIWLAFVPIYFGS). At 795 to 797 (NYK) the chain is on the extracellular side. The chain crosses the membrane as a helical span at residues 798 to 819 (IITMCFSVSLSATVALGCMFVP). The Cytoplasmic portion of the chain corresponds to 820–1203 (KVYIILAKPE…RDYTQSSSSL (384 aa)). A Phosphoserine modification is found at serine 860. Position 868 is an omega-N-methylarginine (arginine 868). Disordered regions lie at residues 892 to 1054 (FTPK…GSLM) and 1120 to 1182 (TGGA…ALCI). Polar residues predominate over residues 905–920 (TMSSSNGKSVTWAQNE). Arginine 924 bears the Omega-N-methylarginine mark. Positions 960 to 977 (QGAGAGGGSGPGAAGAGS) are enriched in gly residues. Positions 1007–1019 (PAAARPRSPSPIS) are enriched in low complexity. A phosphoserine mark is found at serine 1014 and serine 1016. 2 stretches are compositionally biased toward polar residues: residues 1039-1054 (HSET…GSLM) and 1165-1176 (DSGSTTPNSPVS).

The protein belongs to the G-protein coupled receptor 3 family. In terms of assembly, the PPXXF motif binds HOMER1, HOMER2 and HOMER3. Interacts with RYR1, RYR2, ITPR1, SHANK1 and SHANK3. Interacts with SIAH1 and TAMALIN. Interacts with NCDN. Interacts with NECAB2. Interacts with CAMK2A.

It is found in the cell membrane. In terms of biological role, G-protein coupled receptor for glutamate. Ligand binding causes a conformation change that triggers signaling via guanine nucleotide-binding proteins (G proteins) and modulates the activity of down-stream effectors. Signaling activates a phosphatidylinositol-calcium second messenger system and generates a calcium-activated chloride current. Plays an important role in the regulation of synaptic plasticity and the modulation of the neural network activity. The chain is Metabotropic glutamate receptor 5 (Grm5) from Mus musculus (Mouse).